The sequence spans 281 residues: Shikimate dehydrogenase (NADP(+)) (281 aa).

Shikimate-binding positions include 14 to 16 and Thr61; that span reads SRS. Lys65 (proton acceptor) is an active-site residue. Asn86 and Asp101 together coordinate shikimate. NADP(+)-binding positions include 127 to 131, 151 to 156, and Val216; these read GAGGA and NRTLAR. Tyr218 lines the shikimate pocket. Gly239 lines the NADP(+) pocket.

This sequence belongs to the shikimate dehydrogenase family. As to quaternary structure, homodimer.

The catalysed reaction is shikimate + NADP(+) = 3-dehydroshikimate + NADPH + H(+). The protein operates within metabolic intermediate biosynthesis; chorismate biosynthesis; chorismate from D-erythrose 4-phosphate and phosphoenolpyruvate: step 4/7. Its function is as follows. Involved in the biosynthesis of the chorismate, which leads to the biosynthesis of aromatic amino acids. Catalyzes the reversible NADPH linked reduction of 3-dehydroshikimate (DHSA) to yield shikimate (SA). In Azorhizobium caulinodans (strain ATCC 43989 / DSM 5975 / JCM 20966 / LMG 6465 / NBRC 14845 / NCIMB 13405 / ORS 571), this protein is Shikimate dehydrogenase (NADP(+)).